The sequence spans 435 residues: Nuclear receptor subfamily 6 group A member 1 (435 aa).

Positions 11–86 (QRACLICGDR…MGMNRKAIRE (76 aa)) form a DNA-binding region, nuclear receptor. NR C4-type zinc fingers lie at residues 14–34 (CLIC…CEGC) and 50–69 (CSRD…CQYC). Residues 84–157 (IREDGMPGGR…VSTPSSSRSM (74 aa)) are disordered. Residues 121–141 (NTSWSNNGDSDHSSPGNGVSE) show a composition bias toward polar residues. A compositionally biased stretch (low complexity) spans 142–156 (SNQPSPVSTPSSSRS). The NR LBD domain occupies 204–435 (QSHTLINQLL…HSCKTSLTKE (232 aa)).

The protein belongs to the nuclear hormone receptor family. NR6 subfamily. In terms of assembly, homodimer.

It localises to the cytoplasm. It is found in the nucleus. Its function is as follows. Probable orphan nuclear receptor. Binds to a response element containing repeats of the motif 5'-AGGTCA-3'. Required for anterior-posterior patterning during organogenesis. Acts with chordin to play a role in patterning the midbrain-hindbrain. Isoform Em is required for integrin-mediated cell matrix interaction during neurulation and for the morphogenetic movements leading to formation of the neural tube. Also mediates the effect of retinoic acid on primary neurogenesis. This Xenopus tropicalis (Western clawed frog) protein is Nuclear receptor subfamily 6 group A member 1.